The following is a 292-amino-acid chain: GTP cyclohydrolase FolE2 (292 aa).

It belongs to the GTP cyclohydrolase IV family.

It carries out the reaction GTP + H2O = 7,8-dihydroneopterin 3'-triphosphate + formate + H(+). The protein operates within cofactor biosynthesis; 7,8-dihydroneopterin triphosphate biosynthesis; 7,8-dihydroneopterin triphosphate from GTP: step 1/1. In terms of biological role, converts GTP to 7,8-dihydroneopterin triphosphate. The protein is GTP cyclohydrolase FolE2 of Staphylococcus carnosus (strain TM300).